We begin with the raw amino-acid sequence, 408 residues long: Peptidase T (408 aa).

Residue histidine 78 participates in Zn(2+) binding. Aspartate 80 is an active-site residue. Aspartate 140 serves as a coordination point for Zn(2+). Glutamate 173 (proton acceptor) is an active-site residue. Zn(2+) is bound by residues glutamate 174, aspartate 196, and histidine 379.

Belongs to the peptidase M20B family. Zn(2+) is required as a cofactor.

Its subcellular location is the cytoplasm. The enzyme catalyses Release of the N-terminal residue from a tripeptide.. In terms of biological role, cleaves the N-terminal amino acid of tripeptides. This is Peptidase T from Escherichia coli (strain K12 / MC4100 / BW2952).